The chain runs to 919 residues: Leucine--tRNA ligase (919 aa).

The short motif at 83-93 is the 'HIGH' region element; it reads PYPSGKLHMGH. The 'KMSKS' region signature appears at 670-674; the sequence is KMSKS. Lys673 provides a ligand contact to ATP.

The protein belongs to the class-I aminoacyl-tRNA synthetase family.

The protein resides in the cytoplasm. It catalyses the reaction tRNA(Leu) + L-leucine + ATP = L-leucyl-tRNA(Leu) + AMP + diphosphate. This Psychrobacter cryohalolentis (strain ATCC BAA-1226 / DSM 17306 / VKM B-2378 / K5) protein is Leucine--tRNA ligase.